A 1066-amino-acid chain; its full sequence is Beta-galactosidase (1066 aa).

Residues N110 and D209 each contribute to the substrate site. Residue D209 participates in Na(+) binding. E432, H434, and E477 together coordinate Mg(2+). Substrate contacts are provided by residues E477 and 553–556; that span reads EYAH. The active-site Proton donor is E477. The Nucleophile role is filled by E553. N613 contacts Mg(2+). Positions 617 and 620 each coordinate Na(+). Residues N620 and W1041 each coordinate substrate.

It belongs to the glycosyl hydrolase 2 family. Homotetramer. It depends on Mg(2+) as a cofactor. The cofactor is Na(+).

It carries out the reaction Hydrolysis of terminal non-reducing beta-D-galactose residues in beta-D-galactosides.. In Yersinia pseudotuberculosis serotype O:1b (strain IP 31758), this protein is Beta-galactosidase.